The primary structure comprises 360 residues: Phenylalanine--tRNA ligase alpha subunit (360 aa).

E260 contacts Mg(2+).

This sequence belongs to the class-II aminoacyl-tRNA synthetase family. Phe-tRNA synthetase alpha subunit type 1 subfamily. Tetramer of two alpha and two beta subunits. It depends on Mg(2+) as a cofactor.

The protein resides in the cytoplasm. The catalysed reaction is tRNA(Phe) + L-phenylalanine + ATP = L-phenylalanyl-tRNA(Phe) + AMP + diphosphate + H(+). This is Phenylalanine--tRNA ligase alpha subunit from Methylobacterium sp. (strain 4-46).